Reading from the N-terminus, the 393-residue chain is Major outer membrane protein P.IA (393 aa).

The N-terminal stretch at 1–19 (MRKKLTALVLSALPLAAVA) is a signal peptide.

This sequence belongs to the Gram-negative porin family. In terms of assembly, homotrimer.

The protein localises to the cell outer membrane. Serves as a slightly cation selective porin. Major antigen on the gonococcal cell surface and it may have pathogenic properties in addition to its porin activity. This is Major outer membrane protein P.IA (porA) from Neisseria meningitidis serogroup C.